Reading from the N-terminus, the 923-residue chain is Probable dipeptidyl-aminopeptidase B (923 aa).

A compositionally biased stretch (basic and acidic residues) spans 1–16; that stretch reads MATEKGHGRDDEERVP. Positions 1 to 21 are disordered; it reads MATEKGHGRDDEERVPLTRGS. The Cytoplasmic portion of the chain corresponds to 1-99; it reads MATEKGHGRD…KPMHKSVKIA (99 aa). A helical; Signal-anchor for type II membrane protein transmembrane segment spans residues 100 to 120; it reads LWTLLFLSLGGWSLAFVLFIF. The Vacuolar segment spans residues 121–923; it reads RSHDTYETPI…GLSYNFKHLH (803 aa). 3 N-linked (GlcNAc...) asparagine glycosylation sites follow: Asn-135, Asn-351, and Asn-574. Ser-756 serves as the catalytic Charge relay system. Asn-815 is a glycosylation site (N-linked (GlcNAc...) asparagine). Active-site charge relay system residues include Asp-833 and His-866. Residue Asn-902 is glycosylated (N-linked (GlcNAc...) asparagine).

The protein belongs to the peptidase S9B family.

Its subcellular location is the vacuole membrane. It catalyses the reaction Release of an N-terminal dipeptide, Xaa-Yaa-|-Zaa-, from a polypeptide, preferentially when Yaa is Pro, provided Zaa is neither Pro nor hydroxyproline.. Type IV dipeptidyl-peptidase which removes N-terminal dipeptides sequentially from polypeptides having unsubstituted N-termini provided that the penultimate residue is proline. In Ajellomyces capsulatus (strain G186AR / H82 / ATCC MYA-2454 / RMSCC 2432) (Darling's disease fungus), this protein is Probable dipeptidyl-aminopeptidase B (DAPB).